A 428-amino-acid polypeptide reads, in one-letter code: UPF0229 protein YeaH (428 aa).

Residues Gly78 to Arg90 are compositionally biased toward basic and acidic residues. The disordered stretch occupies residues Gly78–Glu111. Positions Gln92 to Gln103 are enriched in gly residues.

Belongs to the UPF0229 family.

The protein is UPF0229 protein YeaH of Salmonella paratyphi C (strain RKS4594).